A 348-amino-acid polypeptide reads, in one-letter code: NADH-ubiquinone oxidoreductase chain 2 (348 aa).

Helical transmembrane passes span 13–33, 60–80, 93–113, 149–169, 178–197, 202–219, 246–266, 274–294, and 326–346; these read VGLG…WMGL, FLTQ…NAWM, IAST…PMHF, IDPL…GWGG, ILAY…IQYA, LIAL…FLTL, LVLL…KWLI, DLPI…YFYL, and LALF…ILML.

The protein belongs to the complex I subunit 2 family.

It is found in the mitochondrion inner membrane. It carries out the reaction a ubiquinone + NADH + 5 H(+)(in) = a ubiquinol + NAD(+) + 4 H(+)(out). Functionally, core subunit of the mitochondrial membrane respiratory chain NADH dehydrogenase (Complex I) that is believed to belong to the minimal assembly required for catalysis. Complex I functions in the transfer of electrons from NADH to the respiratory chain. The immediate electron acceptor for the enzyme is believed to be ubiquinone. The chain is NADH-ubiquinone oxidoreductase chain 2 (MT-ND2) from Cyprinus carpio (Common carp).